The following is a 358-amino-acid chain: Mannonate dehydratase (358 aa).

It belongs to the mannonate dehydratase family. Fe(2+) is required as a cofactor. Mn(2+) serves as cofactor.

The catalysed reaction is D-mannonate = 2-dehydro-3-deoxy-D-gluconate + H2O. It participates in carbohydrate metabolism; pentose and glucuronate interconversion. Functionally, catalyzes the dehydration of D-mannonate. The polypeptide is Mannonate dehydratase (Lactococcus lactis subsp. cremoris (strain MG1363)).